Here is a 32-residue protein sequence, read N- to C-terminus: Cytochrome b6-f complex subunit 7 (32 aa).

The helical transmembrane segment at 5–25 (IFTVAGVMWALVLTGLSVGFG) threads the bilayer.

Belongs to the PetM family. The 4 large subunits of the cytochrome b6-f complex are cytochrome b6, subunit IV (17 kDa polypeptide, PetD), cytochrome f and the Rieske protein, while the 4 small subunits are PetG, PetL, PetM and PetN. The complex functions as a dimer.

It is found in the plastid. It localises to the chloroplast thylakoid membrane. Its function is as follows. Component of the cytochrome b6-f complex, which mediates electron transfer between photosystem II (PSII) and photosystem I (PSI), cyclic electron flow around PSI, and state transitions. The polypeptide is Cytochrome b6-f complex subunit 7 (Emiliania huxleyi (Coccolithophore)).